Consider the following 357-residue polypeptide: Peptide chain release factor 1 (357 aa).

Gln-233 carries the post-translational modification N5-methylglutamine. The segment at Arg-284 to Ile-305 is disordered.

Belongs to the prokaryotic/mitochondrial release factor family. In terms of processing, methylated by PrmC. Methylation increases the termination efficiency of RF1.

It is found in the cytoplasm. Peptide chain release factor 1 directs the termination of translation in response to the peptide chain termination codons UAG and UAA. The chain is Peptide chain release factor 1 from Clostridium novyi (strain NT).